A 169-amino-acid polypeptide reads, in one-letter code: uncharacterized protein (169 aa).

Residues 18–79 (LDRADVALLN…IVSPKAVGRP (62 aa)) form the HTH asnC-type domain. Residues 37–56 (SEELADKVGLSPTACQRRLK) constitute a DNA-binding region (H-T-H motif).

This is an uncharacterized protein from Sinorhizobium fredii (strain NBRC 101917 / NGR234).